A 438-amino-acid chain; its full sequence is Argininosuccinate lyase (438 aa).

This sequence belongs to the lyase 1 family. Argininosuccinate lyase subfamily.

It is found in the cytoplasm. It carries out the reaction 2-(N(omega)-L-arginino)succinate = fumarate + L-arginine. The protein operates within amino-acid biosynthesis; L-arginine biosynthesis; L-arginine from L-ornithine and carbamoyl phosphate: step 3/3. This chain is Argininosuccinate lyase, found in Clostridium tetani (strain Massachusetts / E88).